The chain runs to 72 residues: Potassium channel toxin epsilon-KTx 1.1 (72 aa).

Positions 1–30 (MKLSCGFLLILLVLSAMIATFSEVEAMKPS) are cleaved as a signal peptide. Intrachain disulfides connect cysteine 34–cysteine 42, cysteine 37–cysteine 58, cysteine 41–cysteine 51, and cysteine 46–cysteine 56. The propeptide occupies 60–72 (GRSDLNDELEKYQ).

The protein belongs to the short scorpion toxin superfamily. Potassium channel inhibitor family. Epsilon-KTx 01 subfamily. Expressed by the venom gland.

It is found in the secreted. In terms of biological role, potassium channel blocker. At 3 uM, this toxin blocks voltage-independently voltage-gated potassium channels rKv1.2/KCNA2 (25%), hKv1.3/KCNA3 (27%), rKv4.2/KCND2 (25%), Kv10.1/KCNH1/EAG1 (15%), Kv11/hERG (12%), and Shaker-IR (10%). On hKv1.3/KCNA3, the IC(50) is 17.1 +-3.3 uM. This is Potassium channel toxin epsilon-KTx 1.1 from Tityus serrulatus (Brazilian scorpion).